Here is a 350-residue protein sequence, read N- to C-terminus: Mitochondrial glycine transporter (350 aa).

Solcar repeat units lie at residues 23-107, 134-218, and 250-334; these read SKPK…LRQC, LSHT…SKKN, and SSIS…LILK. The next 6 membrane-spanning stretches (helical) occupy residues 29-54, 82-108, 140-165, 193-216, 254-280, and 309-327; these read FIAG…TRIQ, GTLP…RQCI, LLTG…VRYE, GFGA…EQSK, VNFV…KTRL, and GLGL…AWTV.

It belongs to the mitochondrial carrier (TC 2.A.29) family. SLC25A38 subfamily.

The protein localises to the mitochondrion inner membrane. It catalyses the reaction glycine(in) = glycine(out). In terms of biological role, mitochondrial glycine transporter that imports glycine into the mitochondrial matrix. Plays an important role in providing glycine for the first enzymatic step in heme biosynthesis, the condensation of glycine with succinyl-CoA to produce 5-aminolevulinate (ALA) in the mitochondrial matrix. In Ajellomyces capsulatus (strain NAm1 / WU24) (Darling's disease fungus), this protein is Mitochondrial glycine transporter.